The sequence spans 503 residues: Probable inactive beta-glucosidase 33 (503 aa).

Residues 1–30 form the signal peptide; it reads MATGELALVSSLFIVVVFLLLGAVAREASA. Residues Q50, H150, and 195–196 each bind a beta-D-glucoside; that span reads NQ. C215 and C223 are disulfide-bonded. Residue N222 is glycosylated (N-linked (GlcNAc...) asparagine). A beta-D-glucoside is bound by residues Y339 and E399. Catalysis depends on E399, which acts as the Nucleophile. N-linked (GlcNAc...) asparagine glycosylation occurs at N436. Residues W446, 453 to 454, and F462 contribute to the a beta-D-glucoside site; that span reads EF.

The protein belongs to the glycosyl hydrolase 1 family.

The sequence is that of Probable inactive beta-glucosidase 33 (BGLU33) from Oryza sativa subsp. japonica (Rice).